The following is a 423-amino-acid chain: Acetylornithine aminotransferase, mitochondrial (423 aa).

Residues 1–13 constitute a mitochondrion transit peptide; it reads MFKRYLSSTSSRR. Residue K276 is modified to N6-(pyridoxal phosphate)lysine.

This sequence belongs to the class-III pyridoxal-phosphate-dependent aminotransferase family. Requires pyridoxal 5'-phosphate as cofactor.

It localises to the mitochondrion matrix. It carries out the reaction N(2)-acetyl-L-ornithine + 2-oxoglutarate = N-acetyl-L-glutamate 5-semialdehyde + L-glutamate. Its pathway is amino-acid biosynthesis; L-arginine biosynthesis; N(2)-acetyl-L-ornithine from L-glutamate: step 4/4. Its function is as follows. catalyzes the conversion of N-acetylglutamate-gamma-semialdehyde (NAGSA) to N-acetylornithine in arginine biosynthesis. This chain is Acetylornithine aminotransferase, mitochondrial (ARG8), found in Saccharomyces cerevisiae (strain ATCC 204508 / S288c) (Baker's yeast).